The sequence spans 345 residues: Heat-inducible transcription repressor HrcA (345 aa).

The protein belongs to the HrcA family.

In terms of biological role, negative regulator of class I heat shock genes (grpE-dnaK-dnaJ and groELS operons). Prevents heat-shock induction of these operons. This is Heat-inducible transcription repressor HrcA from Lachnoclostridium phytofermentans (strain ATCC 700394 / DSM 18823 / ISDg) (Clostridium phytofermentans).